Here is a 256-residue protein sequence, read N- to C-terminus: Ribonuclease 3 (256 aa).

One can recognise an RNase III domain in the interval 6-128; it reads LATLETRLDH…LFGAVFLDAG (123 aa). E41 is a binding site for Mg(2+). D45 is an active-site residue. 2 residues coordinate Mg(2+): D114 and E117. The active site involves E117. Positions 155–225 constitute a DRBM domain; the sequence is DAKTLLQEFL…AKVALEAAQA (71 aa).

This sequence belongs to the ribonuclease III family. In terms of assembly, homodimer. Mg(2+) serves as cofactor.

It is found in the cytoplasm. The catalysed reaction is Endonucleolytic cleavage to 5'-phosphomonoester.. Its function is as follows. Digests double-stranded RNA. Involved in the processing of primary rRNA transcript to yield the immediate precursors to the large and small rRNAs (23S and 16S). Processes some mRNAs, and tRNAs when they are encoded in the rRNA operon. Processes pre-crRNA and tracrRNA of type II CRISPR loci if present in the organism. This is Ribonuclease 3 from Bordetella bronchiseptica (strain ATCC BAA-588 / NCTC 13252 / RB50) (Alcaligenes bronchisepticus).